The chain runs to 221 residues: Imidazoleglycerol-phosphate dehydratase (221 aa).

Belongs to the imidazoleglycerol-phosphate dehydratase family.

The enzyme catalyses D-erythro-1-(imidazol-4-yl)glycerol 3-phosphate = 3-(imidazol-4-yl)-2-oxopropyl phosphate + H2O. Its pathway is amino-acid biosynthesis; L-histidine biosynthesis; L-histidine from 5-phospho-alpha-D-ribose 1-diphosphate: step 6/9. This chain is Imidazoleglycerol-phosphate dehydratase (HIS3), found in Kluyveromyces lactis (strain ATCC 8585 / CBS 2359 / DSM 70799 / NBRC 1267 / NRRL Y-1140 / WM37) (Yeast).